The chain runs to 194 residues: Orotate phosphoribosyltransferase (194 aa).

Glutamate 116–serine 124 is a binding site for 5-phospho-alpha-D-ribose 1-diphosphate. Residues threonine 120 and arginine 148 each contribute to the orotate site.

This sequence belongs to the purine/pyrimidine phosphoribosyltransferase family. PyrE subfamily. As to quaternary structure, homodimer. It depends on Mg(2+) as a cofactor.

The catalysed reaction is orotidine 5'-phosphate + diphosphate = orotate + 5-phospho-alpha-D-ribose 1-diphosphate. The protein operates within pyrimidine metabolism; UMP biosynthesis via de novo pathway; UMP from orotate: step 1/2. Functionally, catalyzes the transfer of a ribosyl phosphate group from 5-phosphoribose 1-diphosphate to orotate, leading to the formation of orotidine monophosphate (OMP). The polypeptide is Orotate phosphoribosyltransferase (Caulobacter vibrioides (strain ATCC 19089 / CIP 103742 / CB 15) (Caulobacter crescentus)).